The chain runs to 120 residues: Ig heavy chain V region AC38 15.3 (120 aa).

The segment at 1-98 (QVQLLQPGTE…EDSAVYYCAR (98 aa)) is v segment. The cysteines at positions 22 and 96 are disulfide-linked. A d segment region spans residues 99–105 (WDYEGDR). The segment at 106–120 (YFDVWGTGTTVTVSS) is j segment.

This chain is Ig heavy chain V region AC38 15.3, found in Mus musculus (Mouse).